Reading from the N-terminus, the 1163-residue chain is MEVEASGTEDNGDGGAKEPEAVVSIDTETKEAADEAKSQETVPQTPTTSSDSSSSGGGGEATDGTPNAESADPPPPPPPPPPPPPSTPADSTAAAASPAVLTEMSPPPPASTSSSSSTPAAPINLLDTCAVCKQSLQNRDCEPKLLPCLHSFCLKCIPQPDRKITMPVQGPHGQDTRIVNVMRCTVCHQDYKQIDMVDNYFVKDTSEATNTSVENSTQVCTSCEDNASAIGFCVECGEWLCKTCIEAHQRVKFTKDHKIRKKEEVSPESVGTSGQRPVFCPVHKQEALKLFCETCDTLTCRDCQLLEHKEHRYQFLDEACQNQKGIIATFMTKLQEKRGLVEYSASEVQKRLKEVAETHKKVEHEIKIAVFTLINEINKKGKSLLQQLESVTKDRSMKLLSQQRDISVLAQQIIHVLNFTNWAITNGSSTALLYSKRLITYQLRLIMKARVDAVPPANGAVRFFCDPTFWAKNVVNLGNLVIEKVAPTAPPSNMMVNQQISPGHNHPGKHSGQINLAQLRLQHMQQAAIAQKHQQQHQHHQQQQHQHQHQQQQQQQQQQQQQQQQQQQQQQHQQQIQQQMRIASQMSQHPRQGAPQMIQQPPPRLISMQALHRGGVNGSSHMFPPHHLRMVSAQNRMPSAQPRLNGQPYPMMQPQLQRQHSNPGHAGPFPVASLHNISAANPTSPTSASMANAHMHRGPSSPVITPIELIPSVTNPENLPCLPDIPPIQLEDAGSSTLDNILSRYISANAYPTVGPTNPSPGPSTHSPGSSGLSNSHTPARPSSTSSTGSRGSSGTTVDQVKVKQEPGVEEECSYSGANVKTERTKDGRRSACMMSSPEGSLTPPLPILGSVSTGSVQDILRTLGENVKSEPQSDNLSSCTNPNSRATLTNGTSGSNGGQRGGATNANSQTTAGKEDDPNEDWCAVCQNGGELLCCDHCPKVFHITCHIPTLKSSPSGDWMCTFCRNLANPEIEYNCDDDPPRNKEKNEMAMSPEEQRRCERLLLHVFCHELSTEFQEPVPTSVPNYYKIIKHPMDLTLVKRKLQRKHPLHYKSPKEFVSDVRLVFSNCAKYNEMSRIIQVYDEEKQSNVQADSEVAEAGKAVSLYFEERLLEIFPEQTFPVVMEKETQIEAEKEDSDDSDDDIIQPKRKRLKVDTEMLLHIK.

A disordered region spans residues 1 to 119; that stretch reads MEVEASGTED…ASTSSSSSTP (119 aa). Over residues 27 to 38 the composition is skewed to basic and acidic residues; it reads TETKEAADEAKS. Over residues 45 to 54 the composition is skewed to low complexity; that stretch reads TPTTSSDSSS. Residues 72–87 show a composition bias toward pro residues; that stretch reads DPPPPPPPPPPPPPST. Residues 88 to 99 are compositionally biased toward low complexity; sequence PADSTAAAASPA. An RING-type zinc finger spans residues 129 to 188; sequence CAVCKQSLQNRDCEPKLLPCLHSFCLKCIPQPDRKITMPVQGPHGQDTRIVNVMRCTVCH. The segment at 215-268 adopts a B box-type 1; atypical zinc-finger fold; sequence NSTQVCTSCEDNASAIGFCVECGEWLCKTCIEAHQRVKFTKDHKIRKKEEVSPE. Residues C220, C223, C244, H257, C280, H283, C303, and H308 each coordinate Zn(2+). Residues 275-316 form a B box-type 2 zinc finger; that stretch reads QRPVFCPVHKQEALKLFCETCDTLTCRDCQLLEHKEHRYQFL. Positions 345 to 369 form a coiled coil; the sequence is ASEVQKRLKEVAETHKKVEHEIKIA. Positions 524–533 are enriched in low complexity; that stretch reads MQQAAIAQKH. Disordered stretches follow at residues 524–555, 575–599, 656–706, 753–848, and 867–918; these read MQQA…QQQQ, QIQQ…QMIQ, LQRQ…VITP, TVGP…PLPI, and NVKS…KEDD. Basic residues predominate over residues 534–548; sequence QQQHQHHQQQQHQHQ. Polar residues predominate over residues 580–590; it reads MRIASQMSQHP. Low complexity-rich tracts occupy residues 678–691 and 753–797; these read SAAN…ASMA and TVGP…SGTT. Residues 821-830 are compositionally biased toward basic and acidic residues; that stretch reads KTERTKDGRR. Over residues 870-889 the composition is skewed to polar residues; the sequence is SEPQSDNLSSCTNPNSRATL. A PHD-type zinc finger spans residues 921-968; that stretch reads EDWCAVCQNGGELLCCDHCPKVFHITCHIPTLKSSPSGDWMCTFCRNL. Residues 991-1114 enclose the Bromo domain; sequence AMSPEEQRRC…LYFEERLLEI (124 aa). The segment at 1128-1147 is disordered; sequence TQIEAEKEDSDDSDDDIIQP. Over residues 1133–1144 the composition is skewed to acidic residues; it reads EKEDSDDSDDDI.

The protein localises to the nucleus. It catalyses the reaction S-ubiquitinyl-[E2 ubiquitin-conjugating enzyme]-L-cysteine + [acceptor protein]-L-lysine = [E2 ubiquitin-conjugating enzyme]-L-cysteine + N(6)-ubiquitinyl-[acceptor protein]-L-lysine.. It participates in protein modification; protein ubiquitination. In terms of biological role, may act as an E3 ubiquitin-protein ligase and a transcriptional repressor. Involved in the regulation of embryonic and adult hematopoiesis. Required for normal development and survival of both committed erythroid progenitor cells and posterior mesenchymal cells. The polypeptide is E3 ubiquitin-protein ligase TRIM33 (trim33) (Danio rerio (Zebrafish)).